Reading from the N-terminus, the 244-residue chain is Methanethiol S-methyltransferase (244 aa).

Helical transmembrane passes span 7 to 27 (IIYGAASYLVFLVAFGYAIGF), 41 to 61 (IAAPIGQAVVVNLVLLGVFAV), 90 to 110 (LLASVALLLLYWQWRTMPAVI), 120 to 140 (VALWALFWLGWATVLTSTFMI), and 181 to 201 (GFVVAFWATPMMTAGHLLFAI).

It belongs to the nurim family.

The protein resides in the membrane. It catalyses the reaction methanethiol + S-adenosyl-L-methionine = dimethyl sulfide + S-adenosyl-L-homocysteine + H(+). Functionally, catalyzes the methylation of methanethiol (MeSH) to yield dimethylsulphide (DMS). In Mycobacterium tuberculosis (strain ATCC 25618 / H37Rv), this protein is Methanethiol S-methyltransferase.